The following is a 250-amino-acid chain: Shieldin complex subunit 3 (250 aa).

The tract at residues 28-83 is sufficient for interaction with MAD2L2; the sequence is QDFPTRPLSRFIPWFPYDGSKLPLRPKRSPPVISEEAAEDVKQYLTISEHDAKSHS. Over residues 108 to 119 the composition is skewed to polar residues; the sequence is LKEQTNSGNLGK. Residues 108-129 form a disordered region; the sequence is LKEQTNSGNLGKQSEKGKQHKR.

Component of the shieldin complex, consisting of SHLD1, SHLD2, SHLD3 and MAD2L2/REV7. Within the complex, SHLD2 forms a scaffold which interacts with a SHLD3-MAD2L2 subcomplex via its N-terminus, and with SHLD1 via its C-terminus. Interacts with ASTE1.

Its subcellular location is the chromosome. Its function is as follows. Component of the shieldin complex, which plays an important role in repair of DNA double-stranded breaks (DSBs). During G1 and S phase of the cell cycle, the complex functions downstream of TP53BP1 to promote non-homologous end joining (NHEJ) and suppress DNA end resection. Mediates various NHEJ-dependent processes including immunoglobulin class-switch recombination, and fusion of unprotected telomeres. The polypeptide is Shieldin complex subunit 3 (Homo sapiens (Human)).